Reading from the N-terminus, the 260-residue chain is 3-methyl-2-oxobutanoate hydroxymethyltransferase (260 aa).

Aspartate 42 and aspartate 81 together coordinate Mg(2+). Residues 42-43, aspartate 81, and lysine 109 contribute to the 3-methyl-2-oxobutanoate site; that span reads DS. Residue glutamate 111 participates in Mg(2+) binding. Glutamate 178 serves as the catalytic Proton acceptor.

Belongs to the PanB family. Homodecamer; pentamer of dimers. It depends on Mg(2+) as a cofactor.

The protein resides in the cytoplasm. It catalyses the reaction 3-methyl-2-oxobutanoate + (6R)-5,10-methylene-5,6,7,8-tetrahydrofolate + H2O = 2-dehydropantoate + (6S)-5,6,7,8-tetrahydrofolate. It participates in cofactor biosynthesis; (R)-pantothenate biosynthesis; (R)-pantoate from 3-methyl-2-oxobutanoate: step 1/2. Its function is as follows. Catalyzes the reversible reaction in which hydroxymethyl group from 5,10-methylenetetrahydrofolate is transferred onto alpha-ketoisovalerate to form ketopantoate. The polypeptide is 3-methyl-2-oxobutanoate hydroxymethyltransferase (Ruthia magnifica subsp. Calyptogena magnifica).